We begin with the raw amino-acid sequence, 204 residues long: Large ribosomal subunit protein eL15 (204 aa).

It belongs to the eukaryotic ribosomal protein eL15 family.

This Tetrahymena thermophila (strain SB210) protein is Large ribosomal subunit protein eL15 (RPL15).